A 587-amino-acid polypeptide reads, in one-letter code: Probable intramembrane protease YKL100C (587 aa).

Residues 1–85 (MDKYLNSFVD…HSLVFNYATL (85 aa)) lie on the Lumenal side of the membrane. Residues 86–106 (VLIASALVVIGSFTSISSIPF) traverse the membrane as a helical segment. Residues 107-156 (TALPPTREHSLFDPTDFDVDHDCHVIYRENDEDKKKKKKSKRFFDMMDEK) are Cytoplasmic-facing. The chain crosses the membrane as a helical span at residues 157 to 177 (HAIILPLTSGCTLLALYFVIK). The Lumenal portion of the chain corresponds to 178–192 (KLHLNWLKYVVKILN). Residues 193–213 (FNITLLNIPAGTFVYSYFLNS) form a helical membrane-spanning segment. The Cytoplasmic segment spans residues 214–303 (LFRNLSHLAS…KSKRQISNMY (90 aa)). A helical membrane pass occupies residues 304 to 324 (LNSALIVSFVLSIVSTVYFYL). Over 325-328 (SPND) the chain is Lumenal. Residues 329 to 349 (WLISNAVSMNMAIWSIAQLKL) traverse the membrane as a helical segment. Topologically, residues 350–351 (KN) are cytoplasmic. Residues 352-372 (LKSGALILIALFFYDICFVFG) traverse the membrane as a helical segment. The active site involves Asp-366. Residues 373–401 (TDVMVTVATNLDIPVKLSLPVKFNTAQNN) lie on the Lumenal side of the membrane. The chain crosses the membrane as a helical span at residues 402-422 (FNFSILGLGDIALPGMFIAMC). Asp-411 is a catalytic residue. Over 423–450 (YKYDIWKWHLDHDDTEFHFLNWSYVGKY) the chain is Cytoplasmic. Residues 451–471 (FITAMVSYVASLVSAMVSLSI) traverse the membrane as a helical segment. Topologically, residues 472–475 (FNTA) are lumenal. Residues 476–496 (QPALLYIVPSLLISTILVACW) traverse the membrane as a helical segment. Positions 477–479 (PAL) match the PAL motif. Residues 497 to 587 (NKDFKQFWNF…EEDLLDDESS (91 aa)) lie on the Cytoplasmic side of the membrane. Residues 561 to 587 (EFVQEEDLSDSSEEELSEEDLLDDESS) form a disordered region.

This sequence belongs to the peptidase A22B family.

Its subcellular location is the membrane. The protein resides in the endoplasmic reticulum membrane. Its function is as follows. May act as intramembrane protease. The chain is Probable intramembrane protease YKL100C from Saccharomyces cerevisiae (strain ATCC 204508 / S288c) (Baker's yeast).